A 330-amino-acid chain; its full sequence is 1-aminocyclopropane-1-carboxylate oxidase 2 (330 aa).

The Fe2OG dioxygenase domain maps to 153-253; sequence PNFGTKVSNY…RMSIASFYNP (101 aa). Residues His177, Asp179, and His234 each contribute to the Fe cation site.

The protein belongs to the iron/ascorbate-dependent oxidoreductase family. Monomer. Fe cation is required as a cofactor.

The catalysed reaction is 1-aminocyclopropane-1-carboxylate + L-ascorbate + O2 = ethene + L-dehydroascorbate + hydrogen cyanide + CO2 + 2 H2O. It functions in the pathway alkene biosynthesis; ethylene biosynthesis via S-adenosyl-L-methionine; ethylene from S-adenosyl-L-methionine: step 2/2. The sequence is that of 1-aminocyclopropane-1-carboxylate oxidase 2 (ACO2) from Malus domestica (Apple).